The chain runs to 291 residues: ATP synthase gamma chain (291 aa).

This sequence belongs to the ATPase gamma chain family. As to quaternary structure, F-type ATPases have 2 components, CF(1) - the catalytic core - and CF(0) - the membrane proton channel. CF(1) has five subunits: alpha(3), beta(3), gamma(1), delta(1), epsilon(1). CF(0) has three main subunits: a, b and c.

Its subcellular location is the cell membrane. Its function is as follows. Produces ATP from ADP in the presence of a proton gradient across the membrane. The gamma chain is believed to be important in regulating ATPase activity and the flow of protons through the CF(0) complex. The sequence is that of ATP synthase gamma chain from Buchnera aphidicola subsp. Schizaphis graminum (strain Sg).